We begin with the raw amino-acid sequence, 1854 residues long: Immunoglobulin A1 protease (1854 aa).

An N-terminal signal peptide occupies residues 1–37; the sequence is MKKFLGEKQTRFAFRKLAVGLVSAAISSLFFVSIVGV. Positions 38–99 are excised as a propeptide; sequence DSVQAQEKLN…NAGAKTLPNT (62 aa). The LPXTG sorting signal signature appears at 96 to 100; the sequence is LPNTG. T99 carries the pentaglycyl murein peptidoglycan amidated threonine modification. 2 helical membrane-spanning segments follow: residues 106–125 and 132–154; these read TMMA…FAVS and KFLL…VDAL. Over 155 to 1854 the chain is Extracellular; sequence ENGSLLQYNA…FRKSIFENQK (1700 aa). Residues 256–335 enclose the G5 domain; that stretch reads KPELLYKETS…PKIVEKGTKK (80 aa). A run of 10 repeats spans residues 349–368, 369–388, 389–406, 407–426, 427–446, 447–466, 467–486, 487–506, 507–526, and 527–546. The 10 X 20 AA approximate tandem repeats stretch occupies residues 349 to 546; sequence VQPEQVAPLP…EYTGNIEPAA (198 aa). Low complexity predominate over residues 533–550; sequence EPPQEYTGNIEPAAPEAE. Positions 533 to 570 are disordered; it reads EPPQEYTGNIEPAAPEAENPTEKAQEPKEQKQEPEKNI. Residues 552 to 570 show a composition bias toward basic and acidic residues; the sequence is PTEKAQEPKEQKQEPEKNI. Residue H1494 participates in Zn(2+) binding. Residue E1495 is part of the active site. Zn(2+) contacts are provided by H1498 and E1518.

This sequence belongs to the peptidase M26 family. It depends on Zn(2+) as a cofactor. In terms of processing, the Gram-positive cell-wall anchor motif LPXTG is located in the N-terminal part, in contrast to such motifs in other known streptococcal and staphylococcal proteins. The protease could be cleaved by the sortase and anchored in the membrane via the two potential N-terminal transmembrane domains, whereas the propeptide located prior to the LPXTG motif would remain attached to the cell wall peptidoglycan by an amide bond.

The protein localises to the secreted. The protein resides in the cell wall. It localises to the membrane. The catalysed reaction is Cleavage of Pro-|-Thr bond in the hinge region of the heavy chain of human IgA.. With respect to regulation, inhibited by EDTA. Zinc metalloproteinase which cleaves human immunoglobulin A1 (IgA1) in the hinge region. The polypeptide is Immunoglobulin A1 protease (iga) (Streptococcus sanguinis).